The primary structure comprises 458 residues: BUD13 homolog (458 aa).

3 disordered regions span residues 16-37, 81-328, and 437-458; these read SGDI…SGLR, KQTF…TEEL, and AKTE…AEYE. Residues 138–148 show a composition bias toward basic and acidic residues; the sequence is NRHDSDKDNSP. Composition is skewed to basic residues over residues 175 to 185 and 208 to 218; these read RNRRSPPRTRR and PRRRPSSPARR. 3 stretches are compositionally biased toward basic and acidic residues: residues 219-243, 266-284, and 314-328; these read RKDD…KKEE, RDLK…KMFE, and DQAK…TEEL. Residues 262–356 are a coiled coil; it reads LQSARDLKEE…AQLEEMARVA (95 aa).

It belongs to the CWC26 family.

This Caenorhabditis elegans protein is BUD13 homolog.